A 42-amino-acid polypeptide reads, in one-letter code: MESIFLHTNITIIPHSVLYVSLSYYIINPCTSASSNFDDSFS.

A helical transmembrane segment spans residues 5–27; the sequence is FLHTNITIIPHSVLYVSLSYYII.

The protein resides in the membrane. This is an uncharacterized protein from Saccharomyces cerevisiae (strain ATCC 204508 / S288c) (Baker's yeast).